Consider the following 299-residue polypeptide: tRNA dimethylallyltransferase (299 aa).

Residue glycine 11–serine 18 participates in ATP binding. Threonine 13–serine 18 lines the substrate pocket.

This sequence belongs to the IPP transferase family. Monomer. Mg(2+) serves as cofactor.

The enzyme catalyses adenosine(37) in tRNA + dimethylallyl diphosphate = N(6)-dimethylallyladenosine(37) in tRNA + diphosphate. Functionally, catalyzes the transfer of a dimethylallyl group onto the adenine at position 37 in tRNAs that read codons beginning with uridine, leading to the formation of N6-(dimethylallyl)adenosine (i(6)A). This chain is tRNA dimethylallyltransferase, found in Pseudarthrobacter chlorophenolicus (strain ATCC 700700 / DSM 12829 / CIP 107037 / JCM 12360 / KCTC 9906 / NCIMB 13794 / A6) (Arthrobacter chlorophenolicus).